The chain runs to 115 residues: Large ribosomal subunit protein bL19 (115 aa).

The protein belongs to the bacterial ribosomal protein bL19 family.

This protein is located at the 30S-50S ribosomal subunit interface and may play a role in the structure and function of the aminoacyl-tRNA binding site. The protein is Large ribosomal subunit protein bL19 of Nitrosococcus oceani (strain ATCC 19707 / BCRC 17464 / JCM 30415 / NCIMB 11848 / C-107).